The sequence spans 187 residues: Threonylcarbamoyl-AMP synthase (187 aa).

The region spanning 4-187 (TPDLDAAVAT…DARTGQILRD (184 aa)) is the YrdC-like domain.

The protein belongs to the SUA5 family. TsaC subfamily.

Its subcellular location is the cytoplasm. The catalysed reaction is L-threonine + hydrogencarbonate + ATP = L-threonylcarbamoyladenylate + diphosphate + H2O. In terms of biological role, required for the formation of a threonylcarbamoyl group on adenosine at position 37 (t(6)A37) in tRNAs that read codons beginning with adenine. Catalyzes the conversion of L-threonine, HCO(3)(-)/CO(2) and ATP to give threonylcarbamoyl-AMP (TC-AMP) as the acyladenylate intermediate, with the release of diphosphate. The protein is Threonylcarbamoyl-AMP synthase of Xanthomonas campestris pv. campestris (strain 8004).